We begin with the raw amino-acid sequence, 555 residues long: Glypican-6 (555 aa).

Residues 1 to 23 (MPSWIGAVILPLLGLLLSLPAGA) form the signal peptide. Residues 348–357 (PALRSARSAP) show a composition bias toward low complexity. Disordered stretches follow at residues 348 to 376 (PALR…PTTA) and 480 to 501 (GNDV…GSGC). A lipid anchor (GPI-anchor amidated serine) is attached at Ser-529. A propeptide spans 530–555 (SAAQRGHSLLSWSLTCIVLALQRLCR) (removed in mature form).

It belongs to the glypican family. As to expression, widely expressed. High expression in fetal kidney and lung and lower expressions in fetal liver and brain. In adult tissues, very abundant in ovary, high levels also observed in liver, kidney, small intestine and colon. Not detected in peripheral blood leukocytes. Detected in breast cancer cells (at protein level).

It localises to the cell membrane. It is found in the secreted. Its subcellular location is the extracellular space. In terms of biological role, cell surface proteoglycan that bears heparan sulfate. Putative cell surface coreceptor for growth factors, extracellular matrix proteins, proteases and anti-proteases. Enhances migration and invasion of cancer cells through WNT5A signaling. In Homo sapiens (Human), this protein is Glypican-6 (GPC6).